A 101-amino-acid polypeptide reads, in one-letter code: Urease subunit gamma (101 aa).

This sequence belongs to the urease gamma subunit family. In terms of assembly, heterotrimer of UreA (gamma), UreB (beta) and UreC (alpha) subunits. Three heterotrimers associate to form the active enzyme.

The protein resides in the cytoplasm. It catalyses the reaction urea + 2 H2O + H(+) = hydrogencarbonate + 2 NH4(+). It participates in nitrogen metabolism; urea degradation; CO(2) and NH(3) from urea (urease route): step 1/1. The polypeptide is Urease subunit gamma (Ureaplasma urealyticum serovar 10 (strain ATCC 33699 / Western)).